We begin with the raw amino-acid sequence, 225 residues long: Phosphatidylserine decarboxylase proenzyme (225 aa).

The Schiff-base intermediate with substrate; via pyruvic acid role is filled by serine 195. Pyruvic acid (Ser); by autocatalysis is present on serine 195.

This sequence belongs to the phosphatidylserine decarboxylase family. PSD-A subfamily. As to quaternary structure, heterodimer of a large membrane-associated beta subunit and a small pyruvoyl-containing alpha subunit. It depends on pyruvate as a cofactor. Post-translationally, is synthesized initially as an inactive proenzyme. Formation of the active enzyme involves a self-maturation process in which the active site pyruvoyl group is generated from an internal serine residue via an autocatalytic post-translational modification. Two non-identical subunits are generated from the proenzyme in this reaction, and the pyruvate is formed at the N-terminus of the alpha chain, which is derived from the carboxyl end of the proenzyme. The post-translation cleavage follows an unusual pathway, termed non-hydrolytic serinolysis, in which the side chain hydroxyl group of the serine supplies its oxygen atom to form the C-terminus of the beta chain, while the remainder of the serine residue undergoes an oxidative deamination to produce ammonia and the pyruvoyl prosthetic group on the alpha chain.

It localises to the cell membrane. It catalyses the reaction a 1,2-diacyl-sn-glycero-3-phospho-L-serine + H(+) = a 1,2-diacyl-sn-glycero-3-phosphoethanolamine + CO2. The protein operates within phospholipid metabolism; phosphatidylethanolamine biosynthesis; phosphatidylethanolamine from CDP-diacylglycerol: step 2/2. Catalyzes the formation of phosphatidylethanolamine (PtdEtn) from phosphatidylserine (PtdSer). This Gluconobacter oxydans (strain 621H) (Gluconobacter suboxydans) protein is Phosphatidylserine decarboxylase proenzyme.